Here is a 544-residue protein sequence, read N- to C-terminus: Peptide chain release factor 3 (544 aa).

Residues 17–286 form the tr-type G domain; the sequence is EKRRNFAIIS…SFLDYGLAPR (270 aa). GTP contacts are provided by residues 26-33, 94-98, and 148-151; these read SHPDAGKT, DTPGH, and NKMD.

Belongs to the TRAFAC class translation factor GTPase superfamily. Classic translation factor GTPase family. PrfC subfamily.

It localises to the cytoplasm. Increases the formation of ribosomal termination complexes and stimulates activities of RF-1 and RF-2. It binds guanine nucleotides and has strong preference for UGA stop codons. It may interact directly with the ribosome. The stimulation of RF-1 and RF-2 is significantly reduced by GTP and GDP, but not by GMP. The chain is Peptide chain release factor 3 from Microcystis aeruginosa (strain NIES-843 / IAM M-2473).